A 599-amino-acid polypeptide reads, in one-letter code: MRTQYCGLTSEALLDQTVSLCGWVHRRRDHGGVIFIDLRDREGLVQVVCDPDRVDVFKAAEAVRNEFCLRITGIVRHRPEGTTNSNLTSGKIEVLAHELEVLNPSVTPPFQLDDDNLSETTRLTHRVLDLRRPQMQNNLRLRYKVTMEVRKFLDAQGFIDIETPMLTKSTPEGARDYLVPSRVNAGHFFALPQSPQLFKQLLMVANFDRYYQITKCFRDEDLRADRQPEFTQIDCETSFMNEQEIRDLFEGMIRLVFKNCLNVELPNPFPVMDYATAMGMYGSDKPDMRVKLEFTDLTSIMKDVEFKVFSGAANMENGRVVGLRVPGGGAMPRSEIDAYTQFVAIYGAKGLAYIKVNEKAKGRDGLQSPIVKNIHDEALAKIIEATGAQDGDLIFFGADKAKVVNDAIGALRVKVGHSDFGKKNGLFDDEWRPLWVVDFPMFEYDEDSQRWSATHHPFTAPKDGHEDLMETNPGKCLSKAYDMVLNGWELGGGSVRIHRAEVQSKVFRALKISAEEAQLKFGFLLDALQYGAPPHGGLAFGLDRIVTMMTGAESIRDVIAFPKTQRAQCLLTQAPSEVDEKQLRELHIRLRNVEPVVKG.

Glutamate 172 is a binding site for L-aspartate. The interval 196-199 is aspartate; the sequence is QLFK. Arginine 218 contacts L-aspartate. ATP-binding positions include 218–220 and glutamine 227; that span reads RDE. Position 455 (histidine 455) interacts with L-aspartate. An ATP-binding site is contributed by glutamate 489. Arginine 496 is an L-aspartate binding site. 541–544 contributes to the ATP binding site; sequence GLDR.

It belongs to the class-II aminoacyl-tRNA synthetase family. Type 1 subfamily. In terms of assembly, homodimer.

The protein resides in the cytoplasm. The enzyme catalyses tRNA(Asx) + L-aspartate + ATP = L-aspartyl-tRNA(Asx) + AMP + diphosphate. Its function is as follows. Aspartyl-tRNA synthetase with relaxed tRNA specificity since it is able to aspartylate not only its cognate tRNA(Asp) but also tRNA(Asn). Reaction proceeds in two steps: L-aspartate is first activated by ATP to form Asp-AMP and then transferred to the acceptor end of tRNA(Asp/Asn). The chain is Aspartate--tRNA(Asp/Asn) ligase from Herminiimonas arsenicoxydans.